The chain runs to 203 residues: MSGLIGKKIGMTSIFDENGKNIPCTVIQAGPCVVTQVRTKEVDGYEALQLGFDDKKTVGKAAEGHAKKAGTVAKRKVVEFQGYNEDYKLGDSVTVEHFKEGEFVDIAGTSKGKGFQGVVKRHGFGGVGQATHGQHNRLRAPGSIGAASYPARVFKGMKMAGRMGGERVKIENLRVLKVVADKNLLVIKGCVPGSKNSYVIISK.

Belongs to the universal ribosomal protein uL3 family. In terms of assembly, part of the 50S ribosomal subunit. Forms a cluster with proteins L14 and L19.

Functionally, one of the primary rRNA binding proteins, it binds directly near the 3'-end of the 23S rRNA, where it nucleates assembly of the 50S subunit. This Christiangramia forsetii (strain DSM 17595 / CGMCC 1.15422 / KT0803) (Gramella forsetii) protein is Large ribosomal subunit protein uL3.